We begin with the raw amino-acid sequence, 361 residues long: Phenylalanine--tRNA ligase alpha subunit (361 aa).

Mg(2+) is bound at residue Glu-260.

This sequence belongs to the class-II aminoacyl-tRNA synthetase family. Phe-tRNA synthetase alpha subunit type 1 subfamily. Tetramer of two alpha and two beta subunits. The cofactor is Mg(2+).

The protein localises to the cytoplasm. The catalysed reaction is tRNA(Phe) + L-phenylalanine + ATP = L-phenylalanyl-tRNA(Phe) + AMP + diphosphate + H(+). The protein is Phenylalanine--tRNA ligase alpha subunit of Bartonella quintana (strain Toulouse) (Rochalimaea quintana).